The chain runs to 232 residues: uncharacterized protein (232 aa).

The N-terminal stretch at 1–18 is a signal peptide; it reads MGILKSLFTLGKSFISQA. Residues 207–232 are disordered; the sequence is AEAGIGGSNKSSAQDVLARLQRQQGE.

The protein belongs to the PspA/Vipp/IM30 family.

This is an uncharacterized protein from Escherichia coli O6:H1 (strain CFT073 / ATCC 700928 / UPEC).